The sequence spans 559 residues: MTAQNSKFRSVGIRAPRGTQLTAKSWLTEAPLRMLMNNLDPEVAENSYELVVYGGIGRAARNWECYDKIIETLKELEDDETLLIQSGKPVGVFKTHSNAPRVLIANSNLVPHWATWEHFNELDAKGLAMYGQMTAGSWIYIGSQGIVQGTYETFVEAGRQHYNGNLQGRWVLTAGLGGMGGAQPLAATLAGACSLNIECQQSRIDFRLRTGYVDEQAKDLDDALTRIEKYTQEGKAISIALCGNAAEILPELVRRGVRPDLVTDQTSAHDPLNGYLPKNWSWEEYRQRAISAPEEVIKAAKSSMVEHVKAMLIFQQQGIPVFDYGNNIRQMAYEVGVENAFDFPGFVPTYIRPLFCRGIGPFRWVALSGDPQDIYKTDAKVKELLPDDQHLHHWLDMARERISFQGLPARICWVGLGQRAKLGLAFNEMVRSGELSAPIVIGRDHLDSGSVASPNRETESMCDGSDAVSDWPLLNALLNTASGATWVSLHHGGGVGMGFSQHAGMVIVCDGTDEAAERIARVLHNDPATGVMRHADAGYEIAIHCAKEQGLDLPMLNTK.

NAD(+) contacts are provided by residues 54–55 (GG), Gln-132, 178–180 (GMG), Glu-198, Arg-203, 244–245 (NA), 265–269 (QTSAH), 275–276 (YL), and Tyr-324. Cys-412 is an active-site residue. Residue Gly-494 participates in NAD(+) binding.

It belongs to the urocanase family. NAD(+) serves as cofactor.

Its subcellular location is the cytoplasm. The enzyme catalyses 4-imidazolone-5-propanoate = trans-urocanate + H2O. The protein operates within amino-acid degradation; L-histidine degradation into L-glutamate; N-formimidoyl-L-glutamate from L-histidine: step 2/3. Functionally, catalyzes the conversion of urocanate to 4-imidazolone-5-propionate. The sequence is that of Urocanate hydratase from Photorhabdus laumondii subsp. laumondii (strain DSM 15139 / CIP 105565 / TT01) (Photorhabdus luminescens subsp. laumondii).